The sequence spans 550 residues: Chaperonin GroEL (550 aa).

ATP-binding positions include 29-32, Lys50, 86-90, Gly417, and Asp499; these read TAGP and DGTTT.

This sequence belongs to the chaperonin (HSP60) family. As to quaternary structure, forms a cylinder of 14 subunits composed of two heptameric rings stacked back-to-back. Interacts with the co-chaperonin GroES.

It is found in the cytoplasm. It carries out the reaction ATP + H2O + a folded polypeptide = ADP + phosphate + an unfolded polypeptide.. Functionally, together with its co-chaperonin GroES, plays an essential role in assisting protein folding. The GroEL-GroES system forms a nano-cage that allows encapsulation of the non-native substrate proteins and provides a physical environment optimized to promote and accelerate protein folding. This is Chaperonin GroEL from Ehrlichia chaffeensis.